Reading from the N-terminus, the 51-residue chain is Insulin (51 aa).

3 disulfide bridges follow: cysteine 7/cysteine 37, cysteine 19/cysteine 50, and cysteine 36/cysteine 41.

This sequence belongs to the insulin family. Heterodimer of a B chain and an A chain linked by two disulfide bonds.

It is found in the secreted. Its function is as follows. Insulin decreases blood glucose concentration. It increases cell permeability to monosaccharides, amino acids and fatty acids. It accelerates glycolysis, the pentose phosphate cycle, and glycogen synthesis in liver. The chain is Insulin (INS) from Acomys cahirinus (Cairo spiny mouse).